The sequence spans 540 residues: 2,3-bisphosphoglycerate-independent phosphoglycerate mutase (540 aa).

Mn(2+) is bound by residues aspartate 24 and serine 74. The active-site Phosphoserine intermediate is the serine 74. Substrate is bound by residues histidine 135, 165–166, arginine 197, arginine 203, 268–271, and lysine 341; these read RD and RPDR. Mn(2+) contacts are provided by aspartate 408, histidine 412, aspartate 449, histidine 450, and histidine 467.

The protein belongs to the BPG-independent phosphoglycerate mutase family. As to quaternary structure, monomer. It depends on Mn(2+) as a cofactor.

The catalysed reaction is (2R)-2-phosphoglycerate = (2R)-3-phosphoglycerate. The protein operates within carbohydrate degradation; glycolysis; pyruvate from D-glyceraldehyde 3-phosphate: step 3/5. Functionally, catalyzes the interconversion of 2-phosphoglycerate and 3-phosphoglycerate. The chain is 2,3-bisphosphoglycerate-independent phosphoglycerate mutase from Prochlorococcus marinus (strain SARG / CCMP1375 / SS120).